Consider the following 497-residue polypeptide: 4,4'-diaponeurosporene oxygenase (497 aa).

Position 7–19 (7–19 (VIGGGLGGISAAI)) interacts with FAD.

The protein belongs to the carotenoid/retinoid oxidoreductase family. CrtP subfamily. Requires FAD as cofactor.

It carries out the reaction all-trans-4,4'-diaponeurosporene + 2 AH2 + 2 O2 = 4,4'-diaponeurosporenal + 2 A + 3 H2O. Its pathway is carotenoid biosynthesis; staphyloxanthin biosynthesis; staphyloxanthin from farnesyl diphosphate: step 3/5. Its function is as follows. Involved in the biosynthesis of the yellow-orange carotenoid staphyloxanthin, which plays a role in the virulence via its protective function against oxidative stress. Catalyzes the oxidation of the terminal methyl side group of 4,4'-diaponeurosporene to form 4,4'-diaponeurosporen-4-al. This is 4,4'-diaponeurosporene oxygenase from Staphylococcus aureus (strain USA300).